Consider the following 207-residue polypeptide: MANILHIDSSPRGDRSISRKLSYEFLTSWKDTHPGDTVTYRDLGHNPVPHVDEPWIAAAFSSPDSHTPELKAAIELSDTLIDEFLAADRFVFGVPMYNLNIPSTFKAYIDQIVRVGRTFSVDANGYKGLVDSSKKVLIITSRGGSYPPGTPYAAYDYQEPYLRAILGFMGLTDVTFIHAESLNMGEDAREKSLADAKDAIAQAVANW.

Residues S10, 16 to 18 (SIS), 96 to 99 (MYNL), and 141 to 144 (SRGG) each bind FMN.

The protein belongs to the azoreductase type 1 family. Homodimer. It depends on FMN as a cofactor.

It carries out the reaction 2 a quinone + NADH + H(+) = 2 a 1,4-benzosemiquinone + NAD(+). It catalyses the reaction N,N-dimethyl-1,4-phenylenediamine + anthranilate + 2 NAD(+) = 2-(4-dimethylaminophenyl)diazenylbenzoate + 2 NADH + 2 H(+). In terms of biological role, quinone reductase that provides resistance to thiol-specific stress caused by electrophilic quinones. Its function is as follows. Also exhibits azoreductase activity. Catalyzes the reductive cleavage of the azo bond in aromatic azo compounds to the corresponding amines. The chain is FMN-dependent NADH:quinone oxidoreductase 2 from Trichormus variabilis (strain ATCC 29413 / PCC 7937) (Anabaena variabilis).